The chain runs to 108 residues: Thioredoxin C-2 (108 aa).

In terms of domain architecture, Thioredoxin spans 2-108 (SATIVNTTDE…KLAAFIDQNI (107 aa)). C33 and C36 are joined by a disulfide.

Belongs to the thioredoxin family.

Functionally, participates in various redox reactions through the reversible oxidation of its active center dithiol to a disulfide and catalyzes dithiol-disulfide exchange reactions. The polypeptide is Thioredoxin C-2 (Corynebacterium nephridii).